The following is a 145-amino-acid chain: Probable transport accessory protein MmpS2 (145 aa).

Residues 11–31 form a helical membrane-spanning segment; that stretch reads MWLLLAIVVVAVVGGLGIYRL.

The protein belongs to the MmpS family.

It localises to the cell membrane. This chain is Probable transport accessory protein MmpS2 (mmpS2), found in Mycobacterium bovis (strain ATCC BAA-935 / AF2122/97).